The primary structure comprises 910 residues: Schlafen family member 8 (910 aa).

Residues 1–354 (METHPSLAVK…WVRMMVDFGP (354 aa)) form a n'-domain region region. Catalysis depends on residues Glu-205 and Glu-210. Zn(2+)-binding residues include His-280, Cys-282, and Cys-319. 599 to 606 (GLPGSGKT) serves as a coordination point for ATP.

The protein belongs to the Schlafen family. Subgroup III subfamily. Mg(2+) is required as a cofactor. In T-cells, expressed at relatively constant levels during development: expressed in immature CD3(-)CD4(-)CD8(-) T-cells (DN stage), in CD4(+)CD8(+) double-positive stage (DP) and mature CD4(+) or CD8(+) thymocytes. Expression is slightly reduced at the DP stage.

Its subcellular location is the cytoplasm. In terms of biological role, endoribonuclease that cleaves tRNAs and rRNAs. Cleaves tRNAs 11 nucleotides from the 3'-terminus at the acceptor stem. May be involved in immune system via regulation of inflammation. This is Schlafen family member 8 from Mus musculus (Mouse).